A 519-amino-acid polypeptide reads, in one-letter code: GMP synthase [glutamine-hydrolyzing] (519 aa).

The Glutamine amidotransferase type-1 domain maps to 4 to 201; that stretch reads AILILDFGSQ…VHDICDAGYD (198 aa). Residue cysteine 81 is the Nucleophile of the active site. Residues histidine 175 and glutamate 177 contribute to the active site. The region spanning 202–394 is the GMPS ATP-PPase domain; the sequence is WNMPDYVEEA…LGLPRDLVFR (193 aa). An ATP-binding site is contributed by 229 to 235; sequence SGGVDSS.

Homodimer.

The catalysed reaction is XMP + L-glutamine + ATP + H2O = GMP + L-glutamate + AMP + diphosphate + 2 H(+). The protein operates within purine metabolism; GMP biosynthesis; GMP from XMP (L-Gln route): step 1/1. Its function is as follows. Catalyzes the synthesis of GMP from XMP. This Nitrosomonas eutropha (strain DSM 101675 / C91 / Nm57) protein is GMP synthase [glutamine-hydrolyzing].